The sequence spans 492 residues: Lysine--tRNA ligase (492 aa).

Positions 395 and 402 each coordinate Mg(2+).

It belongs to the class-II aminoacyl-tRNA synthetase family. As to quaternary structure, homodimer. Mg(2+) serves as cofactor.

It localises to the cytoplasm. The catalysed reaction is tRNA(Lys) + L-lysine + ATP = L-lysyl-tRNA(Lys) + AMP + diphosphate. This chain is Lysine--tRNA ligase, found in Thermus thermophilus (strain ATCC BAA-163 / DSM 7039 / HB27).